Consider the following 492-residue polypeptide: DEAD-box ATP-dependent RNA helicase RhpA (492 aa).

The Q motif motif lies at 20 to 48 (PSFNDLGLKESVLKSVYEAGFTSPSPIQE). Residues 51 to 220 (IPAVLQGRDV…DKILENPIKI (170 aa)) form the Helicase ATP-binding domain. An ATP-binding site is contributed by 64 to 71 (AQTGTGKT). Residues 168-171 (DESD) carry the DEAD box motif. The Helicase C-terminal domain occupies 231–393 (DITQRFYVIN…EIPTINENQI (163 aa)). A disordered region spans residues 445–492 (AIQNPKEKTPKPSNKKTPQHERARSFKKGQHRDRHPKTNHYSKKPKRR). Basic residues predominate over residues 469–492 (SFKKGQHRDRHPKTNHYSKKPKRR).

Belongs to the DEAD box helicase family. As to quaternary structure, homodimer. Interacts with RNase J (rnj), might be a member of a minimal RNA degradosome complex.

Its subcellular location is the cytoplasm. It carries out the reaction ATP + H2O = ADP + phosphate + H(+). In terms of biological role, DEAD-box RNA helicase probably involved in RNA degradation. Unwinds dsRNA in both 5'- and 3'-directions. This Helicobacter pylori (strain ATCC 700392 / 26695) (Campylobacter pylori) protein is DEAD-box ATP-dependent RNA helicase RhpA (rhpA).